We begin with the raw amino-acid sequence, 60 residues long: Large ribosomal subunit protein bL32 (60 aa).

A disordered region spans residues 1–21 (MAVQQNKKSPSKRGMHRAHNA). The segment covering 9 to 19 (SPSKRGMHRAH) has biased composition (basic residues).

This sequence belongs to the bacterial ribosomal protein bL32 family.

The polypeptide is Large ribosomal subunit protein bL32 (Albidiferax ferrireducens (strain ATCC BAA-621 / DSM 15236 / T118) (Rhodoferax ferrireducens)).